We begin with the raw amino-acid sequence, 194 residues long: Small ribosomal subunit protein eS7 (194 aa).

The protein belongs to the eukaryotic ribosomal protein eS7 family.

This Drosophila melanogaster (Fruit fly) protein is Small ribosomal subunit protein eS7 (RpS7).